Reading from the N-terminus, the 278-residue chain is 4-deoxy-L-threo-5-hexosulose-uronate ketol-isomerase (278 aa).

Residues H196, H198, E203, and H245 each contribute to the Zn(2+) site.

This sequence belongs to the KduI family. Requires Zn(2+) as cofactor.

The enzyme catalyses 5-dehydro-4-deoxy-D-glucuronate = 3-deoxy-D-glycero-2,5-hexodiulosonate. Its pathway is glycan metabolism; pectin degradation; 2-dehydro-3-deoxy-D-gluconate from pectin: step 4/5. Functionally, catalyzes the isomerization of 5-dehydro-4-deoxy-D-glucuronate to 3-deoxy-D-glycero-2,5-hexodiulosonate. The sequence is that of 4-deoxy-L-threo-5-hexosulose-uronate ketol-isomerase from Salmonella heidelberg (strain SL476).